The sequence spans 180 residues: Large ribosomal subunit protein uL6 (180 aa).

This sequence belongs to the universal ribosomal protein uL6 family. In terms of assembly, part of the 50S ribosomal subunit.

In terms of biological role, this protein binds to the 23S rRNA, and is important in its secondary structure. It is located near the subunit interface in the base of the L7/L12 stalk, and near the tRNA binding site of the peptidyltransferase center. The sequence is that of Large ribosomal subunit protein uL6 from Clostridium beijerinckii (strain ATCC 51743 / NCIMB 8052) (Clostridium acetobutylicum).